The chain runs to 303 residues: Cytoplasmic envelopment protein 1 (303 aa).

The protein belongs to the herpesviridae cytoplasmic envelopment protein 1 family.

It is found in the virion. The protein resides in the virion tegument. The protein localises to the host cytoplasm. It localises to the host Golgi apparatus. In terms of biological role, plays a critical role in cytoplasmic virus egress. Participates in the final step of tegumentation and envelope acquisition within the host cytoplasm. The protein is Cytoplasmic envelopment protein 1 of Equine herpesvirus 1 (strain Ab4p) (EHV-1).